A 92-amino-acid chain; its full sequence is MDRYAVRTWGIVGILGCAAVGAAPTGPASDTTNATARLPTHPPLIRSGGFAVPLIVGGLCLMILGMACLLEVLRRLGRELARCCPHAGQFAP.

The N-terminal stretch at 1–22 (MDRYAVRTWGIVGILGCAAVGA) is a signal peptide. Over 23–49 (APTGPASDTTNATARLPTHPPLIRSGG) the chain is Extracellular. An N-linked (GlcNAc...) asparagine; by host glycan is attached at Asn33. Residues 50 to 70 (FAVPLIVGGLCLMILGMACLL) traverse the membrane as a helical segment. Topologically, residues 71–92 (EVLRRLGRELARCCPHAGQFAP) are cytoplasmic.

This sequence belongs to the alphaherpesvirinae glycoprotein J family.

It localises to the host Golgi apparatus membrane. It is found in the host endoplasmic reticulum membrane. The protein resides in the host endosome membrane. In terms of biological role, functions as an activator of viral protein expression and virus production. In turn, promotes cell-to-cell spread as well as syncytia formation. In Homo sapiens (Human), this protein is Envelope glycoprotein J (gJ).